Consider the following 156-residue polypeptide: Small ribosomal subunit protein uS7c (156 aa).

It belongs to the universal ribosomal protein uS7 family. In terms of assembly, part of the 30S ribosomal subunit.

It localises to the plastid. The protein resides in the chloroplast. Its function is as follows. One of the primary rRNA binding proteins, it binds directly to 16S rRNA where it nucleates assembly of the head domain of the 30S subunit. This chain is Small ribosomal subunit protein uS7c (rps7), found in Rhodomonas salina (Cryptomonas salina).